Here is a 357-residue protein sequence, read N- to C-terminus: DNA replication and repair protein RecF (357 aa).

Residue 31 to 38 (GQNGAGKT) coordinates ATP.

It belongs to the RecF family.

It is found in the cytoplasm. Functionally, the RecF protein is involved in DNA metabolism; it is required for DNA replication and normal SOS inducibility. RecF binds preferentially to single-stranded, linear DNA. It also seems to bind ATP. The protein is DNA replication and repair protein RecF of Coxiella burnetii (strain CbuK_Q154) (Coxiella burnetii (strain Q154)).